Consider the following 179-residue polypeptide: Inosine/xanthosine triphosphatase (179 aa).

8 to 13 is a substrate binding site; it reads TTNPAK. D38 and E68 together coordinate Mg(2+). 68–69 serves as a coordination point for substrate; it reads EA.

This sequence belongs to the YjjX NTPase family. In terms of assembly, homodimer. It depends on Mg(2+) as a cofactor. Requires Mn(2+) as cofactor.

The catalysed reaction is XTP + H2O = XDP + phosphate + H(+). The enzyme catalyses ITP + H2O = IDP + phosphate + H(+). Phosphatase that hydrolyzes non-canonical purine nucleotides such as XTP and ITP to their respective diphosphate derivatives. Probably excludes non-canonical purines from DNA/RNA precursor pool, thus preventing their incorporation into DNA/RNA and avoiding chromosomal lesions. In Proteus mirabilis (strain HI4320), this protein is Inosine/xanthosine triphosphatase.